A 694-amino-acid polypeptide reads, in one-letter code: Elongation factor G (694 aa).

The region spanning 8–287 is the tr-type G domain; sequence EDYRNFGIMA…AVVEFLPAPT (280 aa). GTP contacts are provided by residues 17 to 24, 86 to 90, and 140 to 143; these read AHIDAGKT, DTPGH, and NKMD.

It belongs to the TRAFAC class translation factor GTPase superfamily. Classic translation factor GTPase family. EF-G/EF-2 subfamily.

The protein localises to the cytoplasm. Catalyzes the GTP-dependent ribosomal translocation step during translation elongation. During this step, the ribosome changes from the pre-translocational (PRE) to the post-translocational (POST) state as the newly formed A-site-bound peptidyl-tRNA and P-site-bound deacylated tRNA move to the P and E sites, respectively. Catalyzes the coordinated movement of the two tRNA molecules, the mRNA and conformational changes in the ribosome. This is Elongation factor G from Brucella ovis (strain ATCC 25840 / 63/290 / NCTC 10512).